The primary structure comprises 537 residues: uncharacterized protein (537 aa).

6 helical membrane passes run I5–V25, L40–W60, V63–V83, G115–G135, V149–L169, and V197–I217.

It is found in the plastid. The protein resides in the chloroplast membrane. This is an uncharacterized protein from Ostreococcus tauri.